Reading from the N-terminus, the 75-residue chain is Psi-conotoxin PIIIE (75 aa).

An N-terminal signal peptide occupies residues 1–19; that stretch reads MSKLGALLTICLLLFPITA. A propeptide spanning residues 20–50 is cleaved from the precursor; it reads LLMDGDQPADRPAERMDYDISSEVHRLLERR. 3 positions are modified to 4-hydroxyproline: proline 52, proline 53, and proline 64. Cystine bridges form between cysteine 54–cysteine 66, cysteine 55–cysteine 71, and cysteine 60–cysteine 72. At glycine 74 the chain carries Glycine amide.

Expressed by the venom duct.

It localises to the secreted. Functionally, psi-conotoxins act on postsynaptic membranes, and act as non-competitive antagonist of nicotinic acetylcholine receptors (nAChR). Is more toxic than Psi-conotoxin PIIIF. In vivo, has paralytic activity when injected intraperitoneally into goldfish. The chain is Psi-conotoxin PIIIE from Conus purpurascens (Purple cone).